The sequence spans 116 residues: Protein MGF 110-2L (116 aa).

The N-terminal stretch at 1-19 (MRFFSYLGLLLAGLASLAS) is a signal peptide.

The protein belongs to the asfivirus MGF 110 family.

Its function is as follows. Plays a role in virus cell tropism, and may be required for efficient virus replication in macrophages. This Ornithodoros (relapsing fever ticks) protein is Protein MGF 110-2L.